Reading from the N-terminus, the 33-residue chain is Protamine-1B (33 aa).

The segment at 1-33 (PRRRRRRSSSRPIRRRRPRRVSRRRRRGGRRRR) is disordered.

As to expression, testis.

It is found in the nucleus. It localises to the chromosome. Protamines substitute for histones in the chromatin of sperm during the haploid phase of spermatogenesis. They compact sperm DNA into a highly condensed, stable and inactive complex. The polypeptide is Protamine-1B (Oncorhynchus mykiss (Rainbow trout)).